A 245-amino-acid polypeptide reads, in one-letter code: Tetrahydromethanopterin S-methyltransferase subunit A 1 (245 aa).

Topologically, residues 1–222 (MADKKPAADN…AGNYSGKVQG (222 aa)) are cytoplasmic. His84 is a 5-hydroxybenzimidazolylcob(I)amide binding site. A helical membrane pass occupies residues 223–243 (IMIGLIFTLVIGFLLLMAPLL). Residues 244-245 (GA) lie on the Extracellular side of the membrane.

Belongs to the MtrA family. As to quaternary structure, the complex is composed of 8 subunits; MtrA, MtrB, MtrC, MtrD, MtrE, MtrF, MtrG and MtrH. 5-hydroxybenzimidazolylcob(I)amide serves as cofactor.

It is found in the cell membrane. It catalyses the reaction 5-methyl-5,6,7,8-tetrahydromethanopterin + coenzyme M + 2 Na(+)(in) = 5,6,7,8-tetrahydromethanopterin + methyl-coenzyme M + 2 Na(+)(out). Its pathway is one-carbon metabolism; methanogenesis from CO(2); methyl-coenzyme M from 5,10-methylene-5,6,7,8-tetrahydromethanopterin: step 2/2. Functionally, part of a complex that catalyzes the formation of methyl-coenzyme M and tetrahydromethanopterin from coenzyme M and methyl-tetrahydromethanopterin. This is an energy-conserving, sodium-ion translocating step. This chain is Tetrahydromethanopterin S-methyltransferase subunit A 1, found in Methanobrevibacter ruminantium (strain ATCC 35063 / DSM 1093 / JCM 13430 / OCM 146 / M1) (Methanobacterium ruminantium).